The primary structure comprises 178 residues: Bifunctional protein PyrR (178 aa).

Positions 97–109 (VVLVDDVLYTGRT) match the PRPP-binding motif.

Belongs to the purine/pyrimidine phosphoribosyltransferase family. PyrR subfamily.

The enzyme catalyses UMP + diphosphate = 5-phospho-alpha-D-ribose 1-diphosphate + uracil. Regulates the transcription of the pyrimidine nucleotide (pyr) operon in response to exogenous pyrimidines. Functionally, also displays a weak uracil phosphoribosyltransferase activity which is not physiologically significant. The protein is Bifunctional protein PyrR of Herpetosiphon aurantiacus (strain ATCC 23779 / DSM 785 / 114-95).